The following is a 400-amino-acid chain: Gap junction alpha-8 protein (400 aa).

The stretch at 2–12 (GDWSFLGNILE) is an intramembrane region. The Cytoplasmic segment spans residues 13–21 (QVNEQSTVI). A helical transmembrane segment spans residues 22 to 42 (GRVWLTVLFIFRILILGTAAE). The Extracellular portion of the chain corresponds to 43–71 (LVWGDEQSDFVCNTQQPGCENVCYDEAFP). 3 disulfides stabilise this stretch: C54-C196, C61-C190, and C65-C185. A helical membrane pass occupies residues 72–92 (ISHIRLWVLQIIFVSTPSLVY). Residues 93-156 (FGHAVHHVRM…GTLLRTYILH (64 aa)) are Cytoplasmic-facing. Basic and acidic residues predominate over residues 104 to 118 (EKRKEREEAERRQQA). Residues 104–139 (EKRKEREEAERRQQAEVDEEKLPLAPNQNKGNNPDG) form a disordered region. Residues 129–138 (PNQNKGNNPD) show a composition bias toward polar residues. Residues 157–177 (IIFKTLFEVGFIVGQYFLYGF) form a helical membrane-spanning segment. Residues 178–205 (RILPLYRCGRWPCPNLVDCFVSRPTEKT) are Extracellular-facing. Residues 206–226 (IFIMFMLVVAAVSLFLNLVEI) traverse the membrane as a helical segment. Residues 227 to 400 (SHLILKRIRR…SRARSDDLTV (174 aa)) are Cytoplasmic-facing. The tract at residues 323 to 400 (YAQAKEPEEE…SRARSDDLTV (78 aa)) is disordered. The span at 327-336 (KEPEEEKVKA) shows a compositional bias: basic and acidic residues. Over residues 337–346 (EEEEEQEEEQ) the composition is skewed to acidic residues. Residue S364 is modified to Phosphoserine; by CK2. Residues 381–392 (RSLSRLSKASSR) are compositionally biased toward low complexity.

It belongs to the connexin family. Alpha-type (group II) subfamily. In terms of assembly, a hemichannel or connexon is composed of a hexamer of connexins. A functional gap junction is formed by the apposition of two hemichannels. Forms heteromeric channels with GJA3. During early stages of lens development, interacts with the C-terminus of MIP. In terms of processing, proteolytically cleaved by caspase-3 during lens development. Phosphorylated on Ser-364; which inhibits cleavage by caspase-3.

It is found in the cell membrane. It localises to the cell junction. The protein localises to the gap junction. In terms of biological role, structural component of eye lens gap junctions. Gap junctions are dodecameric channels that connect the cytoplasm of adjoining cells. They are formed by the docking of two hexameric hemichannels, one from each cell membrane. Small molecules and ions diffuse from one cell to a neighboring cell via the central pore. This chain is Gap junction alpha-8 protein (GJA8), found in Gallus gallus (Chicken).